The following is a 337-amino-acid chain: DNA-directed RNA polymerase subunit alpha (337 aa).

Residues 1 to 233 (MVREKVTVST…DLFIPFLHME (233 aa)) form an alpha N-terminal domain (alpha-NTD) region. Residues 265–337 (KKIALKSIFI…FVIDLAKNKF (73 aa)) form an alpha C-terminal domain (alpha-CTD) region.

The protein belongs to the RNA polymerase alpha chain family. In plastids the minimal PEP RNA polymerase catalytic core is composed of four subunits: alpha, beta, beta', and beta''. When a (nuclear-encoded) sigma factor is associated with the core the holoenzyme is formed, which can initiate transcription.

The protein localises to the plastid. It localises to the chloroplast. It carries out the reaction RNA(n) + a ribonucleoside 5'-triphosphate = RNA(n+1) + diphosphate. Functionally, DNA-dependent RNA polymerase catalyzes the transcription of DNA into RNA using the four ribonucleoside triphosphates as substrates. The sequence is that of DNA-directed RNA polymerase subunit alpha from Nicotiana sylvestris (Wood tobacco).